The chain runs to 345 residues: D-alanine--D-alanine ligase (345 aa).

One can recognise an ATP-grasp domain in the interval 137 to 342; the sequence is KAAFSAAGLP…LEELVHQLLE (206 aa). 169-224 provides a ligand contact to ATP; it reads ETQLGYPCFIKPANLGSSVGISKATNRSELQAGLDLAASHDSRLLVEKGLQVRELE. Asp295, Glu309, and Asn311 together coordinate Mg(2+).

Belongs to the D-alanine--D-alanine ligase family. Mg(2+) is required as a cofactor. It depends on Mn(2+) as a cofactor.

Its subcellular location is the cytoplasm. The catalysed reaction is 2 D-alanine + ATP = D-alanyl-D-alanine + ADP + phosphate + H(+). It functions in the pathway cell wall biogenesis; peptidoglycan biosynthesis. Functionally, cell wall formation. The protein is D-alanine--D-alanine ligase of Synechococcus sp. (strain RCC307).